Consider the following 514-residue polypeptide: Protein BFR2 (514 aa).

2 disordered regions span residues 14 to 153 (SKPS…KLKE) and 353 to 382 (YHTSQSDITEQGSIDDQNQDIPNENKQTNK). A compositionally biased stretch (basic and acidic residues) spans 25–42 (NDLRDNVFDHNGDDDHSN). Residues 118–134 (SESEDDDEDESESEDKD) are compositionally biased toward acidic residues. The span at 135–144 (EVTKEEDSNL) shows a compositional bias: basic and acidic residues. Residues 354–378 (HTSQSDITEQGSIDDQNQDIPNENK) are compositionally biased toward polar residues.

This sequence belongs to the AATF family.

The protein localises to the nucleus. It is found in the nucleolus. This Debaryomyces hansenii (strain ATCC 36239 / CBS 767 / BCRC 21394 / JCM 1990 / NBRC 0083 / IGC 2968) (Yeast) protein is Protein BFR2 (BFR2).